We begin with the raw amino-acid sequence, 167 residues long: uncharacterized protein (167 aa).

Positions 70-118 (KIVELRKAMESIITELAYIKGELKGLQEKGESKVERKEIIEEKIQKAMV) form a coiled coil. Residues 128-155 (EKEERKPAKESKRREHDVIIPEGKKEER) show a composition bias toward basic and acidic residues. A disordered region spans residues 128–167 (EKEERKPAKESKRREHDVIIPEGKKEERTDDGEDGLIVCD).

This is an uncharacterized protein from Archaeoglobus fulgidus (strain ATCC 49558 / DSM 4304 / JCM 9628 / NBRC 100126 / VC-16).